The chain runs to 322 residues: uncharacterized protein (322 aa).

This is an uncharacterized protein from Acanthamoeba polyphaga mimivirus (APMV).